Here is a 459-residue protein sequence, read N- to C-terminus: Exodeoxyribonuclease 7 large subunit (459 aa).

This sequence belongs to the XseA family. As to quaternary structure, heterooligomer composed of large and small subunits.

It localises to the cytoplasm. It catalyses the reaction Exonucleolytic cleavage in either 5'- to 3'- or 3'- to 5'-direction to yield nucleoside 5'-phosphates.. In terms of biological role, bidirectionally degrades single-stranded DNA into large acid-insoluble oligonucleotides, which are then degraded further into small acid-soluble oligonucleotides. In Yersinia pseudotuberculosis serotype O:3 (strain YPIII), this protein is Exodeoxyribonuclease 7 large subunit.